We begin with the raw amino-acid sequence, 479 residues long: tRNA modification GTPase MnmE (479 aa).

Residues Arg25, Glu82, and Lys134 each contribute to the (6S)-5-formyl-5,6,7,8-tetrahydrofolate site. Residues 230 to 401 enclose the TrmE-type G domain; the sequence is GLRVVIAGQP…LRAALLARAG (172 aa). Asn240 serves as a coordination point for K(+). Residues 240 to 245, 259 to 265, 284 to 287, 352 to 355, and 382 to 384 each bind GTP; these read NAGKSS, TPIPGTT, DTAG, NKAD, and SAR. Ser244 is a Mg(2+) binding site. The K(+) site is built by Thr259, Ile261, and Thr264. A Mg(2+)-binding site is contributed by Thr265. Lys479 is a (6S)-5-formyl-5,6,7,8-tetrahydrofolate binding site.

This sequence belongs to the TRAFAC class TrmE-Era-EngA-EngB-Septin-like GTPase superfamily. TrmE GTPase family. As to quaternary structure, homodimer. Heterotetramer of two MnmE and two MnmG subunits. Requires K(+) as cofactor.

It localises to the cytoplasm. In terms of biological role, exhibits a very high intrinsic GTPase hydrolysis rate. Involved in the addition of a carboxymethylaminomethyl (cmnm) group at the wobble position (U34) of certain tRNAs, forming tRNA-cmnm(5)s(2)U34. The protein is tRNA modification GTPase MnmE of Leptothrix cholodnii (strain ATCC 51168 / LMG 8142 / SP-6) (Leptothrix discophora (strain SP-6)).